Here is a 513-residue protein sequence, read N- to C-terminus: MITLKRLIHSSRSVCSSGFKVDPNYKLKCGLEIHTQLKTKYKLFSLSSSKFDSEPNTNVSYFDCGLPGTLPKLNPEALYLALKTAVALNSDVQSFSTFDRKHYFYPDQPQGFQITQRYHPIARNGYLELNSKFDDITEDSKTINIEQIQIEQDTGKTNYDKYDKLIKIDLNRSNVPLIELVTKPDFENMSQIRAFIKKYQTLVKHLDVCTGDLETGAIRIDLNVSINGGNRVEVKNLGSSSELASALKSEYHRQIQLTKENFPVIQETRGWNGKETVRLRSKEDAVEYRYVPDSELPFINLDPEISREIAAALPDLPDAIITKLISEPYNLELKHAKFFIANKDILNYYYDLFQIVVIDAGKDHKVANNWLVHELIGAFSKFEVPLDISLIPPTKLGEIIIMVSNDELTTTSAKLLLSQLVKSPDDKELTIQELIEKYDVGKIKDITENELSEAVEEVCVYIIANNQDVIEKIVTGKPKSINYLIGLAMKETNGKVNSNVFESKFKELIADYK.

It belongs to the GatB/GatE family. GatB subfamily. In terms of assembly, subunit of the heterotrimeric GatFAB amidotransferase (AdT) complex, composed of A, B and F subunits.

It is found in the mitochondrion. It carries out the reaction L-glutamyl-tRNA(Gln) + L-glutamine + ATP + H2O = L-glutaminyl-tRNA(Gln) + L-glutamate + ADP + phosphate + H(+). In terms of biological role, allows the formation of correctly charged Gln-tRNA(Gln) through the transamidation of misacylated Glu-tRNA(Gln) in the mitochondria. The reaction takes place in the presence of glutamine and ATP through an activated gamma-phospho-Glu-tRNA(Gln). This Debaryomyces hansenii (strain ATCC 36239 / CBS 767 / BCRC 21394 / JCM 1990 / NBRC 0083 / IGC 2968) (Yeast) protein is Glutamyl-tRNA(Gln) amidotransferase subunit B, mitochondrial.